A 426-amino-acid polypeptide reads, in one-letter code: Tryptophan--tRNA ligase (426 aa).

The 'HIGH' region signature appears at 66 to 74 (PSGEMHLGN). Residues 314-318 (KMSSS) carry the 'KMSKS' region motif.

This sequence belongs to the class-I aminoacyl-tRNA synthetase family.

Its subcellular location is the cytoplasm. The enzyme catalyses tRNA(Trp) + L-tryptophan + ATP = L-tryptophyl-tRNA(Trp) + AMP + diphosphate + H(+). In Thermoplasma acidophilum (strain ATCC 25905 / DSM 1728 / JCM 9062 / NBRC 15155 / AMRC-C165), this protein is Tryptophan--tRNA ligase.